A 556-amino-acid polypeptide reads, in one-letter code: MKSDIEIAQSVALQPITDIVKKVGIDGDDIELYGKYKAKLSFEKMKAVEANEPGKLLLVTAINPTPAGEGKSTMSIGLADALNQMGKKTMLALREPSLGPVMGIKGGAAGGGYAQVLPMEDINLHFTGDMHAITTANNALSALIDNHLQQGNDLGIDPRRIIWKRVLDLNDRALRQVIVGLGSPVNGVPREDGFDITVASEIMAILCLATDLKDLKKRLADIVVAYTYDRKPVYVRDLKVEGALTLILKDAIKPNLVQTIYGTPALIHGGPFANIAHGCNSVLATSTALRLADYTVTEAGFGADLGAEKFLNIKVPNLPKAPDAIVIVATLRALKMHGGVAKSDLAAENCEAVRLGFANLKRHVENMRQFKVPVVVAINEFVADTEAEIATLKALCEEIKVPVELASVWANGAEGGLALAKTVVRVIDQEAADYKRLYSDEDTLEEKVINIVTQIYGGKAVQFGPKAKTQLKQFAEFGWDKLPVCMAKTQYSFSDNPSLLGAPTDFDITIREFVPKTGAGFIVGLTGDVMTMPGLPKVPAAMAMDVAENGTALGLF.

65–72 contributes to the ATP binding site; the sequence is TPAGEGKS.

Belongs to the formate--tetrahydrofolate ligase family.

It catalyses the reaction (6S)-5,6,7,8-tetrahydrofolate + formate + ATP = (6R)-10-formyltetrahydrofolate + ADP + phosphate. It functions in the pathway one-carbon metabolism; tetrahydrofolate interconversion. The protein is Formate--tetrahydrofolate ligase 1 of Streptococcus pyogenes serotype M2 (strain MGAS10270).